The chain runs to 152 residues: Sulfur-rich protein (152 aa).

The span at 1 to 11 (MSTTPIVSGVT) shows a compositional bias: polar residues. The interval 1–21 (MSTTPIVSGVTSQNNSSENVS) is disordered. Over residues 12–21 (SQNNSSENVS) the composition is skewed to low complexity. 2 helical membrane passes run 44-64 (VGLA…LFIL) and 73-93 (IYLA…ILSM).

Its subcellular location is the membrane. In Chlamydia muridarum (strain MoPn / Nigg), this protein is Sulfur-rich protein (srp).